The chain runs to 141 residues: Hemoglobin subunit alpha (141 aa).

A Globin domain is found at 1–141 (VLSPADKSNV…VSTVLTSKYR (141 aa)). Residue S3 is modified to Phosphoserine. Residues K7 and K11 each carry the N6-succinyllysine modification. N6-acetyllysine; alternate is present on K16. An N6-succinyllysine; alternate modification is found at K16. Y24 is modified (phosphotyrosine). S35 bears the Phosphoserine mark. K40 bears the N6-succinyllysine mark. S49 bears the Phosphoserine mark. Position 58 (H58) interacts with O2. H87 contributes to the heme b binding site. S102 bears the Phosphoserine mark. Residue T108 is modified to Phosphothreonine. Residues S124 and S131 each carry the phosphoserine modification. Phosphothreonine is present on residues T134 and T137. S138 bears the Phosphoserine mark.

The protein belongs to the globin family. Heterotetramer of two alpha chains and two beta chains. Red blood cells.

Involved in oxygen transport from the lung to the various peripheral tissues. Its function is as follows. Hemopressin acts as an antagonist peptide of the cannabinoid receptor CNR1. Hemopressin-binding efficiently blocks cannabinoid receptor CNR1 and subsequent signaling. This chain is Hemoglobin subunit alpha (HBA), found in Leontocebus fuscicollis (Brown-mantled tamarin).